Consider the following 133-residue polypeptide: Phosphoribosyl-AMP cyclohydrolase (133 aa).

Residue Asp-77 coordinates Mg(2+). Zn(2+) is bound at residue Cys-78. Residues Asp-79 and Asp-81 each coordinate Mg(2+). Cys-95 and Cys-102 together coordinate Zn(2+).

It belongs to the PRA-CH family. Homodimer. Mg(2+) is required as a cofactor. Zn(2+) serves as cofactor.

Its subcellular location is the cytoplasm. It carries out the reaction 1-(5-phospho-beta-D-ribosyl)-5'-AMP + H2O = 1-(5-phospho-beta-D-ribosyl)-5-[(5-phospho-beta-D-ribosylamino)methylideneamino]imidazole-4-carboxamide. It participates in amino-acid biosynthesis; L-histidine biosynthesis; L-histidine from 5-phospho-alpha-D-ribose 1-diphosphate: step 3/9. Catalyzes the hydrolysis of the adenine ring of phosphoribosyl-AMP. The protein is Phosphoribosyl-AMP cyclohydrolase of Pseudomonas fluorescens (strain Pf0-1).